Consider the following 343-residue polypeptide: Ribosomal RNA small subunit methyltransferase C (343 aa).

Belongs to the methyltransferase superfamily. RsmC family. In terms of assembly, monomer.

The protein localises to the cytoplasm. It carries out the reaction guanosine(1207) in 16S rRNA + S-adenosyl-L-methionine = N(2)-methylguanosine(1207) in 16S rRNA + S-adenosyl-L-homocysteine + H(+). Specifically methylates the guanine in position 1207 of 16S rRNA in the 30S particle. The sequence is that of Ribosomal RNA small subunit methyltransferase C from Escherichia coli (strain ATCC 8739 / DSM 1576 / NBRC 3972 / NCIMB 8545 / WDCM 00012 / Crooks).